Reading from the N-terminus, the 110-residue chain is Body wall hemoglobin (110 aa).

Positions 2–110 constitute a Globin domain; sequence VNWAAVVDAF…GAVDAIISHF (109 aa). His70 contributes to the heme binding site.

Belongs to the globin family. Homotetramer.

The polypeptide is Body wall hemoglobin (Cerebratulus lacteus (Milky ribbon worm)).